Reading from the N-terminus, the 766-residue chain is MAALSGGGGGGAEPGQALFNGDMEPEAGAGAGAAASSAADPAIPEEVWNIKQMIKLTQEHIEALLDKFGGEHNPPSIYLEAYEEYTSKLDALQQREQQLLESLGNGTDFSVSSSASMDTVTSSSSSSLSVLPSSLSVFQNPTDVARSNPKSPQKPIVRVFLPNKQRTVVPARCGVTVRDSLKKALMMRGLIPECCAVYRIQDGEKKPIGWDTDISWLTGEELHVEVLENVPLTTHNFVRKTFFTLAFCDFCRKLLFQGFRCQTCGYKFHQRCSTEVPLMCVNYDQLDLLFVSKFFEHHPIPQEEASLAETALTSGSSPSAPASDSIGPQILTSPSPSKSIPIPQPFRPADEDHRNQFGQRDRSSSAPNVHINTIEPVNIDDLIRDQGFRGDGGSTTGLSATPPASLPGSLTNVKALQKSPGPQRERKSSSSSEDRNRMKTLGRRDSSDDWEIPDGQITVGQRIGSGSFGTVYKGKWHGDVAVKMLNVTAPTPQQLQAFKNEVGVLRKTRHVNILLFMGYSTKPQLAIVTQWCEGSSLYHHLHIIETKFEMIKLIDIARQTAQGMDYLHAKSIIHRDLKSNNIFLHEDLTVKIGDFGLATVKSRWSGSHQFEQLSGSILWMAPEVIRMQDKNPYSFQSDVYAFGIVLYELMTGQLPYSNINNRDQIIFMVGRGYLSPDLSKVRSNCPKAMKRLMAECLKKKRDERPLFPQILASIELLARSLPKIHRSASEPSLNRAGFQTEDFSLYACASPKTPIQAGGYGAFPVH.

A compositionally biased stretch (gly residues) spans 1 to 13 (MAALSGGGGGGAE). Residues 1–38 (MAALSGGGGGGAEPGQALFNGDMEPEAGAGAGAAASSA) form a disordered region. At A2 the chain carries N-acetylalanine. S151 carries the phosphoserine modification. Positions 155–227 (PIVRVFLPNK…TGEELHVEVL (73 aa)) constitute an RBD domain. Residues 234 to 280 (THNFVRKTFFTLAFCDFCRKLLFQGFRCQTCGYKFHQRCSTEVPLMC) form a Phorbol-ester/DAG-type zinc finger. Residues H235, C248, C251, C261, C264, H269, C272, and C280 each contribute to the Zn(2+) site. The tract at residues 308 to 454 (AETALTSGSS…DSSDDWEIPD (147 aa)) is disordered. A compositionally biased stretch (low complexity) spans 314–341 (SGSSPSAPASDSIGPQILTSPSPSKSIP). Position 333 is a phosphoserine (S333). Residues 348 to 363 (PADEDHRNQFGQRDRS) are compositionally biased toward basic and acidic residues. At S365 the chain carries Phosphoserine; by SGK1. T373 is subject to Phosphothreonine; by autocatalysis. A Phosphothreonine modification is found at T396. A Phosphoserine modification is found at S399. A Phosphothreonine modification is found at T401. Positions 423–447 (QRERKSSSSSEDRNRMKTLGRRDSS) are enriched in basic and acidic residues. Phosphoserine occurs at positions 446 and 447. Positions 457–717 (ITVGQRIGSG…PQILASIELL (261 aa)) constitute a Protein kinase domain. ATP-binding positions include 463–471 (IGSGSFGTV) and K483. The active-site Proton acceptor is D576. A Glycyl lysine isopeptide (Lys-Gly) (interchain with G-Cter in ubiquitin) cross-link involves residue K578. R671 carries the omega-N-methylarginine; by PRMT5 modification. A phosphoserine mark is found at S729 and S750. A Phosphothreonine; by MAPK1 modification is found at T753.

The protein belongs to the protein kinase superfamily. TKL Ser/Thr protein kinase family. RAF subfamily. In terms of assembly, monomer. Homodimer. Heterodimerizes with RAF1, and the heterodimer possesses a highly increased kinase activity compared to the respective homodimers or monomers. Heterodimerization is mitogen-regulated and enhanced by 14-3-3 proteins. MAPK1/ERK2 activation can induce a negative feedback that promotes the dissociation of the heterodimer by phosphorylating BRAF at Thr-753. Heterodimerizes (via N-terminus) with KSR1 (via N-terminus) or KSR2 (via N-terminus) in a MAP2K1-dependent manner. Interacts with MAP2K1 and MAP2K2. Found in a complex with at least BRAF, HRAS, MAP2K1, MAPK3 and RGS14. Interacts with RIT1. Interacts (via N-terminus) with RGS14 (via RBD domains); the interaction mediates the formation of a ternary complex with RAF1, a ternary complex inhibited by GNAI1. Interacts with DGKH. Interacts with PRMT5. Interacts with KSR2. Interacts with AKAP13, MAP2K1 and KSR1. Identified in a complex with AKAP13, MAP2K1 and KSR1. Interacts with FNIP1 and FNIP2. Zn(2+) is required as a cofactor. In terms of processing, phosphorylation at Ser-365 by SGK1 inhibits its activity. Phosphorylation at Thr-753 by MAPK1. Dephosphorylation of Ser-365 by the SHOC2-MRAS-PP1c (SMP) complex consisting of SHOC2, GTP-bound M-Ras/MRAS and the catalytic subunit of protein phosphatase 1 (PPP1CA, PPP1CB or PPP1CC); this relieves inactivation and stimulates kinase activity. Post-translationally, methylation at Arg-671 decreases stability and kinase activity. Ubiquitinated by RNF149; which leads to proteasomal degradation. Polyubiquitinated at Lys-578 in response to EGF. Brain and testis.

It is found in the nucleus. Its subcellular location is the cytoplasm. The protein resides in the cell membrane. It carries out the reaction L-seryl-[protein] + ATP = O-phospho-L-seryl-[protein] + ADP + H(+). The enzyme catalyses L-threonyl-[protein] + ATP = O-phospho-L-threonyl-[protein] + ADP + H(+). With respect to regulation, in quiescent cells, maintained in an inactive state via an intramolecular interaction between the protein kinase and N-terminal domains. Following mitogen-mediated cell activation, binds via its RGB domain to active HRAS (GTP-bound) which releases the inhibitory intramolecular interaction between the two domains. This allows the MAP2K1-mediated dimerization of KSR1 or KSR2, and BRAF which activates BRAF. In terms of biological role, protein kinase involved in the transduction of mitogenic signals from the cell membrane to the nucleus. Phosphorylates MAP2K1, and thereby activates the MAP kinase signal transduction pathway. Phosphorylates PFKFB2. May play a role in the postsynaptic responses of hippocampal neurons. The sequence is that of Serine/threonine-protein kinase B-raf from Homo sapiens (Human).